Here is a 170-residue protein sequence, read N- to C-terminus: Photosystem II extrinsic protein V (170 aa).

The signal sequence occupies residues 1–34 (MNKILGIDPLKKFIFGISAFVLLFWQLNVGAANA). Residues cysteine 70, cysteine 73, histidine 74, and histidine 125 each coordinate heme c.

It belongs to the cytochrome c family. PsbV subfamily. In terms of assembly, PSII is composed of 1 copy each of membrane proteins PsbA, PsbB, PsbC, PsbD, PsbE, PsbF, PsbH, PsbI, PsbJ, PsbK, PsbL, PsbM, PsbT, PsbX, PsbY, PsbZ, Psb30/Ycf12, peripheral proteins PsbO, CyanoQ (PsbQ), PsbU, PsbV and a large number of cofactors. It forms dimeric complexes. Heme c serves as cofactor.

The protein resides in the cellular thylakoid membrane. One of the extrinsic, lumenal subunits of photosystem II (PSII). PSII is a light-driven water plastoquinone oxidoreductase, using light energy to abstract electrons from H(2)O, generating a proton gradient subsequently used for ATP formation. The extrinsic proteins stabilize the structure of photosystem II oxygen-evolving complex (OEC), the ion environment of oxygen evolution and protect the OEC against heat-induced inactivation. Low-potential cytochrome c that plays a role in the OEC of PSII. This is Photosystem II extrinsic protein V from Picosynechococcus sp. (strain ATCC 27264 / PCC 7002 / PR-6) (Agmenellum quadruplicatum).